The chain runs to 115 residues: Protein SPIRAL1-like 2 (115 aa).

The interval 29–48 is disordered; the sequence is AKAKPAAAAEKETTPAPVKK.

It belongs to the SPIRAL1 family.

Functionally, acts in maintaining the cortical microtubules organization essential for anisotropic cell growth. This chain is Protein SPIRAL1-like 2, found in Oryza sativa subsp. japonica (Rice).